The primary structure comprises 295 residues: tRNA-cytidine(32) 2-sulfurtransferase (295 aa).

The PP-loop motif signature appears at 59 to 64 (SGGKDS). [4Fe-4S] cluster-binding residues include cysteine 134, cysteine 137, and cysteine 225.

This sequence belongs to the TtcA family. In terms of assembly, homodimer. Mg(2+) is required as a cofactor. The cofactor is [4Fe-4S] cluster.

The protein resides in the cytoplasm. The enzyme catalyses cytidine(32) in tRNA + S-sulfanyl-L-cysteinyl-[cysteine desulfurase] + AH2 + ATP = 2-thiocytidine(32) in tRNA + L-cysteinyl-[cysteine desulfurase] + A + AMP + diphosphate + H(+). It functions in the pathway tRNA modification. Catalyzes the ATP-dependent 2-thiolation of cytidine in position 32 of tRNA, to form 2-thiocytidine (s(2)C32). The sulfur atoms are provided by the cysteine/cysteine desulfurase (IscS) system. The polypeptide is tRNA-cytidine(32) 2-sulfurtransferase (Ruegeria sp. (strain TM1040) (Silicibacter sp.)).